A 394-amino-acid chain; its full sequence is Argininosuccinate synthase (394 aa).

Residue 8–16 participates in ATP binding; sequence AYSGGLDTS. 2 residues coordinate L-citrulline: tyrosine 86 and serine 91. Position 116 (glycine 116) interacts with ATP. The L-aspartate site is built by threonine 118, asparagine 122, and aspartate 123. An L-citrulline-binding site is contributed by asparagine 122. Arginine 126, serine 172, serine 181, glutamate 257, and tyrosine 269 together coordinate L-citrulline.

Belongs to the argininosuccinate synthase family. Type 1 subfamily. As to quaternary structure, homotetramer.

It localises to the cytoplasm. The catalysed reaction is L-citrulline + L-aspartate + ATP = 2-(N(omega)-L-arginino)succinate + AMP + diphosphate + H(+). It participates in amino-acid biosynthesis; L-arginine biosynthesis; L-arginine from L-ornithine and carbamoyl phosphate: step 2/3. The polypeptide is Argininosuccinate synthase (Methanosarcina mazei (strain ATCC BAA-159 / DSM 3647 / Goe1 / Go1 / JCM 11833 / OCM 88) (Methanosarcina frisia)).